A 234-amino-acid polypeptide reads, in one-letter code: Large ribosomal subunit protein uL1 (234 aa).

It belongs to the universal ribosomal protein uL1 family. In terms of assembly, part of the 50S ribosomal subunit.

Binds directly to 23S rRNA. The L1 stalk is quite mobile in the ribosome, and is involved in E site tRNA release. In terms of biological role, protein L1 is also a translational repressor protein, it controls the translation of the L11 operon by binding to its mRNA. This is Large ribosomal subunit protein uL1 from Yersinia enterocolitica serotype O:8 / biotype 1B (strain NCTC 13174 / 8081).